We begin with the raw amino-acid sequence, 311 residues long: Taste receptor type 2 member 40 (311 aa).

Residues methionine 1–cysteine 9 are Extracellular-facing. Residues leucine 10–valine 30 traverse the membrane as a helical segment. The Cytoplasmic segment spans residues serine 31 to arginine 55. The chain crosses the membrane as a helical span at residues phenylalanine 56–tyrosine 76. The Extracellular segment spans residues tyrosine 77–threonine 87. A helical membrane pass occupies residues valine 88–cysteine 108. Over valine 109–serine 128 the chain is Cytoplasmic. The chain crosses the membrane as a helical span at residues leucine 129–phenylalanine 149. At tryptophan 150–asparagine 178 the chain is on the extracellular side. The chain crosses the membrane as a helical span at residues leucine 179–phenylalanine 199. Topologically, residues serine 200–lysine 235 are cytoplasmic. Residues threonine 236–serine 256 form a helical membrane-spanning segment. Residues aspartate 257–glutamate 266 are Extracellular-facing. Residues alanine 267–serine 287 traverse the membrane as a helical segment. Residues asparagine 288–serine 311 lie on the Cytoplasmic side of the membrane.

Belongs to the G-protein coupled receptor T2R family. As to expression, expressed in the oral cavity, as well as in the gastrointestinal tract, including in the upper palate, tongue, proventriculus, ventriculus, duodenum, jejunum, ileum, cecum and colon.

It localises to the cell membrane. Bitter taste receptor. Binds quinine, dextromethorphan, diphenhydramine, diphenidol, chlorpheniramine, diphenidol, chloramphenicol, chloroquine and coumarin, this latter being a weak agonist, as well as epiquinidine, ethylhydrocupreine and quinidine. In Gallus gallus (Chicken), this protein is Taste receptor type 2 member 40 (TAS2R40).